Consider the following 445-residue polypeptide: Probable D-serine dehydratase (445 aa).

Lys111 carries the post-translational modification N6-(pyridoxal phosphate)lysine.

Belongs to the serine/threonine dehydratase family. DsdA subfamily. Requires pyridoxal 5'-phosphate as cofactor.

The enzyme catalyses D-serine = pyruvate + NH4(+). In Burkholderia pseudomallei (strain 668), this protein is Probable D-serine dehydratase.